The chain runs to 655 residues: Peroxidase skpo-1 (655 aa).

A signal peptide spans 1-19 (MKSLLFSILLIYLIQLVRS). Residues 22-56 (CTDKHIHCFFWSQEGECEVNPRWMKKHCQKACGTC) enclose the ShKT domain. 4 cysteine pairs are disulfide-bonded: cysteine 22–cysteine 56, cysteine 29–cysteine 49, cysteine 38–cysteine 53, and cysteine 133–cysteine 150. Catalysis depends on histidine 222, which acts as the Proton acceptor. Residue histidine 428 coordinates heme b. Cystine bridges form between cysteine 520-cysteine 576 and cysteine 617-cysteine 642.

The protein belongs to the peroxidase family. XPO subfamily. It depends on heme b as a cofactor. Exclusively expressed in hypodermis.

The catalysed reaction is 2 a phenolic donor + H2O2 = 2 a phenolic radical donor + 2 H2O. Functionally, involved in hypodermal immune response against some types of bacterial infection. Probably utilizes H(2)O(2) produced by the NADPH oxidase bli-3. May play a role in cuticule biosynthesis. This chain is Peroxidase skpo-1, found in Caenorhabditis elegans.